Here is a 549-residue protein sequence, read N- to C-terminus: Hydroxylamine reductase (549 aa).

[4Fe-4S] cluster is bound by residues Cys-5, Cys-8, Cys-17, and Cys-23. Positions 243, 267, 311, 403, 431, 456, 491, and 493 each coordinate hybrid [4Fe-2O-2S] cluster. Position 403 is a cysteine persulfide (Cys-403).

Belongs to the HCP family. It depends on [4Fe-4S] cluster as a cofactor. Requires hybrid [4Fe-2O-2S] cluster as cofactor.

It is found in the cytoplasm. It catalyses the reaction A + NH4(+) + H2O = hydroxylamine + AH2 + H(+). Catalyzes the reduction of hydroxylamine to form NH(3) and H(2)O. This chain is Hydroxylamine reductase, found in Desulfitobacterium hafniense (strain Y51).